The sequence spans 120 residues: Large ribosomal subunit protein uL18 (120 aa).

Belongs to the universal ribosomal protein uL18 family. Part of the 50S ribosomal subunit; part of the 5S rRNA/L5/L18/L25 subcomplex. Contacts the 5S and 23S rRNAs.

Functionally, this is one of the proteins that bind and probably mediate the attachment of the 5S RNA into the large ribosomal subunit, where it forms part of the central protuberance. The polypeptide is Large ribosomal subunit protein uL18 (Methylobacterium sp. (strain 4-46)).